An 89-amino-acid polypeptide reads, in one-letter code: MSVADIKKQDIVKDNGRSANDTGSPEVQVALLTARINELQPHFKAHMKDHHSRRGLLRMVSRRRRLLDYLKSKDADRYTALVAKLGLRK.

The span at 1–16 (MSVADIKKQDIVKDNG) shows a compositional bias: basic and acidic residues. The segment at 1 to 24 (MSVADIKKQDIVKDNGRSANDTGS) is disordered.

Belongs to the universal ribosomal protein uS15 family. Part of the 30S ribosomal subunit. Forms a bridge to the 50S subunit in the 70S ribosome, contacting the 23S rRNA.

Its function is as follows. One of the primary rRNA binding proteins, it binds directly to 16S rRNA where it helps nucleate assembly of the platform of the 30S subunit by binding and bridging several RNA helices of the 16S rRNA. Functionally, forms an intersubunit bridge (bridge B4) with the 23S rRNA of the 50S subunit in the ribosome. The polypeptide is Small ribosomal subunit protein uS15 (Ralstonia pickettii (strain 12J)).